Consider the following 507-residue polypeptide: 25-hydroxyvitamin D-1 alpha hydroxylase, mitochondrial (507 aa).

Cys-454 provides a ligand contact to heme.

This sequence belongs to the cytochrome P450 family. Heme serves as cofactor. As to expression, kidney.

The protein resides in the mitochondrion membrane. The catalysed reaction is calcidiol + 2 reduced [adrenodoxin] + O2 + 2 H(+) = calcitriol + 2 oxidized [adrenodoxin] + H2O. The enzyme catalyses secalciferol + 2 reduced [adrenodoxin] + O2 + 2 H(+) = calcitetrol + 2 oxidized [adrenodoxin] + H2O. It catalyses the reaction 25-hydroxy-24-oxocalciol + 2 reduced [adrenodoxin] + O2 + 2 H(+) = (1S)-1,25-dihydroxy-24-oxocalciol + 2 oxidized [adrenodoxin] + H2O. It carries out the reaction 25-hydroxyvitamin D2 + 2 reduced [adrenodoxin] + O2 + 2 H(+) = 1alpha,25-dihydroxyvitamin D2 + 2 oxidized [adrenodoxin] + H2O. It participates in hormone biosynthesis; vitamin D biosynthesis. Activated by cardiolipin and dioleoyl phosphatidylethanolamine (DOPE), phospholipids found in the inner mitochondrial membrane. Inhibited by high substrate concentration. Functionally, a cytochrome P450 monooxygenase involved in vitamin D metabolism and in calcium and phosphorus homeostasis. Catalyzes the rate-limiting step in the activation of vitamin D in the kidney, namely the hydroxylation of 25-hydroxyvitamin D3/calcidiol at the C1-alpha position to form the hormonally active form of vitamin D3, 1alpha,25-dihydroxyvitamin D3/calcitriol that acts via the vitamin D receptor (VDR). Has 1-alpha-hydroxylase activity on vitamin D intermediates of the CYP24A1-mediated inactivation pathway. Converts 24R,25-dihydroxyvitamin D3/secalciferol to 1-alpha,24,25-trihydroxyvitamin D3, an active ligand of VDR. Also active on 25-hydroxyvitamin D2. Mechanistically, uses molecular oxygen inserting one oxygen atom into a substrate, and reducing the second into a water molecule, with two electrons provided by NADPH via FDXR/adrenodoxin reductase and FDX1/adrenodoxin. The sequence is that of 25-hydroxyvitamin D-1 alpha hydroxylase, mitochondrial (Cyp27b1) from Mus musculus (Mouse).